Reading from the N-terminus, the 211-residue chain is Glycerol-3-phosphate acyltransferase (211 aa).

A run of 4 helical transmembrane segments spans residues 5-25 (ALGM…ILFC), 80-100 (PLYL…PVFF), 112-132 (FGAI…TWLL), and 138-158 (GYSS…VWWF).

This sequence belongs to the PlsY family. Probably interacts with PlsX.

The protein localises to the cell inner membrane. It carries out the reaction an acyl phosphate + sn-glycerol 3-phosphate = a 1-acyl-sn-glycero-3-phosphate + phosphate. The protein operates within lipid metabolism; phospholipid metabolism. In terms of biological role, catalyzes the transfer of an acyl group from acyl-phosphate (acyl-PO(4)) to glycerol-3-phosphate (G3P) to form lysophosphatidic acid (LPA). This enzyme utilizes acyl-phosphate as fatty acyl donor, but not acyl-CoA or acyl-ACP. The chain is Glycerol-3-phosphate acyltransferase from Pectobacterium carotovorum subsp. carotovorum (strain PC1).